The following is a 674-amino-acid chain: Zyxin (674 aa).

The disordered stretch occupies residues 35–447; it reads PPKPKVNPFR…PHQDQTSGSQ (413 aa). The span at 86-109 shows a compositional bias: pro residues; that stretch reads LPPPPPNEEPMSPPGSSFPPPPPS. The segment covering 110 to 120 has biased composition (low complexity); the sequence is FGDDGPGSPLG. 5 stretches are compositionally biased toward pro residues: residues 121 to 148, 162 to 180, 187 to 209, 222 to 240, and 254 to 266; these read LFPP…PPPL, ASVP…PAPP, KPAP…PPQS, KPSP…PPVA, and AAPP…PPAP. Basic and acidic residues-rich tracts occupy residues 328–341 and 358–387; these read AKHE…KHEA and QRDK…RGER. 3 consecutive LIM zinc-binding domains span residues 481–542, 543–600, and 601–671; these read ELCG…TLEC, CAVC…RRYA, and PRCT…RARA.

It belongs to the zyxin/ajuba family. In terms of assembly, interacts (via LIM2 domain) with hesx1/anf1.

It is found in the cytoplasm. The protein resides in the cytoskeleton. It localises to the cell junction. The protein localises to the focal adhesion. Functionally, adhesion plaque protein. May be a component of a signal transduction pathway that mediates adhesion-stimulated changes in gene expression. Suppresses the transcription-repressing activity of hesx1/anf1. This chain is Zyxin, found in Xenopus tropicalis (Western clawed frog).